The following is a 341-amino-acid chain: Phenylalanine--tRNA ligase alpha subunit (341 aa).

Glu-256 provides a ligand contact to Mg(2+).

It belongs to the class-II aminoacyl-tRNA synthetase family. Phe-tRNA synthetase alpha subunit type 1 subfamily. As to quaternary structure, tetramer of two alpha and two beta subunits. Mg(2+) is required as a cofactor.

The protein localises to the cytoplasm. It carries out the reaction tRNA(Phe) + L-phenylalanine + ATP = L-phenylalanyl-tRNA(Phe) + AMP + diphosphate + H(+). This is Phenylalanine--tRNA ligase alpha subunit from Chlamydia felis (strain Fe/C-56) (Chlamydophila felis).